We begin with the raw amino-acid sequence, 212 residues long: Ribosome maturation factor RimM (212 aa).

In terms of domain architecture, PRC barrel spans 105–181 (EEEFYYADLI…IDSITAGLDN (77 aa)). Positions 181 to 212 (NAELSGEEDEAEGPESARGSRPRGPKSAGEPR) are disordered.

It belongs to the RimM family. Binds ribosomal protein uS19.

The protein localises to the cytoplasm. Functionally, an accessory protein needed during the final step in the assembly of 30S ribosomal subunit, possibly for assembly of the head region. Essential for efficient processing of 16S rRNA. May be needed both before and after RbfA during the maturation of 16S rRNA. It has affinity for free ribosomal 30S subunits but not for 70S ribosomes. This Chelativorans sp. (strain BNC1) protein is Ribosome maturation factor RimM.